Here is a 357-residue protein sequence, read N- to C-terminus: D(4) dopamine receptor (357 aa).

Residues 1–32 (MGNRSAADADGLLAGRGPGTGGGAGSPGAAAA) lie on the Extracellular side of the membrane. N-linked (GlcNAc...) asparagine glycosylation occurs at Asn-3. Residues 33–55 (LVGGVLLIGAVLAGNALVCVSVA) form a helical membrane-spanning segment. Topologically, residues 56 to 65 (AERALQTPTN) are cytoplasmic. Residues 66–88 (YFIVSLAAADLLLALLVLPLFVY) traverse the membrane as a helical segment. Asp-75 is a binding site for Na(+). Topologically, residues 89 to 104 (SEVQGGVWQFSPGLCD) are extracellular. A disulfide bridge connects residues Cys-103 and Cys-180. Residues 105–126 (ALMAMDVMLCTASIFNLCAISA) traverse the membrane as a helical segment. Ser-117 is a Na(+) binding site. Residues 127–146 (DRFVAVAVPLSYNRQSGGGR) are Cytoplasmic-facing. The helical transmembrane segment at 147–170 (QLLLIGATWLLSAAVAAPVLCGLN) threads the bilayer. Over 171–186 (DARGRDPAVCRLEDRD) the chain is Extracellular. Residues 187-208 (YVVYSSVCSFFLPCPVMLLLYW) form a helical membrane-spanning segment. Residues 209–284 (ATFRGLRRWE…ITGRERKAMR (76 aa)) lie on the Cytoplasmic side of the membrane. Residues 225–261 (LHGRRPRRPSGPGPPPPEAVETPEAPEAIPTPDATLA) form a disordered region. Positions 233-242 (PSGPGPPPPE) are enriched in pro residues. Residues 243–259 (AVETPEAPEAIPTPDAT) show a composition bias toward low complexity. The chain crosses the membrane as a helical span at residues 285 to 307 (VLPVVVGAFLVCWTPFFVVHITG). The Extracellular portion of the chain corresponds to 308 to 316 (ALCPACAVP). An intrachain disulfide couples Cys-310 to Cys-313. A helical transmembrane segment spans residues 317–339 (PRLVSAVTWLGYVNSALNPLIYT). Residues 340 to 357 (VFNAEFRAVFRKALRLCC) lie on the Cytoplasmic side of the membrane. The S-palmitoyl cysteine moiety is linked to residue Cys-357.

Belongs to the G-protein coupled receptor 1 family. Forms homo- and heterooligomers with DRD2. D4.7 allele exhibits higher affinity for homodimers compared to DRD2 heterodimers, while alleles D42. and 4.4 have similar affinities for both. The interaction with DRD2 may modulate agonist-induced downstream signaling. Interacts with CLIC6. Interacts with GPRASP1. May interact with ADORA2A. Interacts with KLHL12. Post-translationally, polyubiquitinated by the BCR(KLHL12) E3 ubiquitin ligase complex: polyubiquitination does not lead to degradation of DRD4 protein. Palmitoylated. Palmitoylation of the C-terminal Cys is important for normal expression at the cell membrane.

The protein resides in the cell membrane. Its function is as follows. Dopamine receptor responsible for neuronal signaling in the mesolimbic system of the brain, an area of the brain that regulates emotion and complex behavior. Activated by dopamine, but also by epinephrine and norepinephrine, and by numerous synthetic agonists and drugs. Agonist binding triggers signaling via G proteins that inhibit adenylyl cyclase. Modulates the circadian rhythm of contrast sensitivity by regulating the rhythmic expression of NPAS2 in the retinal ganglion cells. The sequence is that of D(4) dopamine receptor (DRD4) from Mustela putorius furo (European domestic ferret).